A 662-amino-acid polypeptide reads, in one-letter code: MRGAGPSPRQSPRTLRPDPGPAMSFFRRKVKGKEQEKTSDVKSIKASISVHSPQKSTKNHALLEAAGPSHVAINAISANMDSFSSSRTATLKKQPSHMEAAHFGDLGRSCLDYQTQETKSSLSKTLEQVLHDTIVLPYFIQFMELRRMEHLVKFWLEAESFHSTTWSRIRAHSLNTVKQSSLAEPVSPSKKHETTASFLTDSLDKRLEDSGSAQLFMTHSEGIDLNNRTNSTQNHLLLSQECDSAHSLRLEMARAGTHQVSMETQESSSTLTVASRNSPASPLKELSGKLMKSIEQDAVNTFTKYISPDAAKPIPITEAMRNDIIARICGEDGQVDPNCFVLAQSIVFSAMEQEHFSEFLRSHHFCKYQIEVLTSGTVYLADILFCESALFYFSEYMEKEDAVNILQFWLAADNFQSQLAAKKGQYDGQEAQNDAMILYDKYFSLQATHPLGFDDVVRLEIESNICREGGPLPNCFTTPLRQAWTTMEKVFLPGFLSSNLYYKYLNDLIHSVRGDEFLGGNVSLTAPGSVGPPDESHPGSSDSSASQSSVKKASIKILKNFDEAIIVDAASLDPESLYQRTYAGKMTFGRVSDLGQFIRESEPEPDVRKSKGSMFSQAMKKWVQGNTDEAQEELAWKIAKMIVSDIMQQAQYDQPLEKSTKL.

The N-terminal 28 residues, 1–28, are a transit peptide targeting the mitochondrion; it reads MRGAGPSPRQSPRTLRPDPGPAMSFFRR. Residues 1-55 are disordered; that stretch reads MRGAGPSPRQSPRTLRPDPGPAMSFFRRKVKGKEQEKTSDVKSIKASISVHSPQK. The span at 32 to 43 shows a compositional bias: basic and acidic residues; the sequence is GKEQEKTSDVKS. 2 positions are modified to phosphoserine: S52 and S189. 2 RGS domains span residues 125 to 369 and 379 to 505; these read TLEQ…CKYQ and YLAD…YKYL. Polar residues predominate over residues 261–280; that stretch reads SMETQESSSTLTVASRNSPA. Positions 261–282 are disordered; that stretch reads SMETQESSSTLTVASRNSPASP. S281 is modified (phosphoserine). Positions 524–548 are disordered; the sequence is LTAPGSVGPPDESHPGSSDSSASQS. The interval 634–647 is PKA-RII subunit binding; it reads LAWKIAKMIVSDIM.

Its subcellular location is the mitochondrion. It is found in the membrane. The protein resides in the cytoplasm. Differentially targeted protein that binds to type I and II regulatory subunits of protein kinase A and anchors them to the mitochondria or the plasma membrane. Although the physiological relevance between PKA and AKAPS with mitochondria is not fully understood, one idea is that BAD, a proapoptotic member, is phosphorylated and inactivated by mitochondria-anchored PKA. It cannot be excluded too that it may facilitate PKA as well as G protein signal transduction, by acting as an adapter for assembling multiprotein complexes. With its RGS domain, it could lead to the interaction to G-alpha proteins, providing a link between the signaling machinery and the downstream kinase. The protein is A-kinase anchor protein 10, mitochondrial (AKAP10) of Homo sapiens (Human).